Reading from the N-terminus, the 176-residue chain is Prion-like protein doppel (176 aa).

The first 25 residues, 1–25, serve as a signal peptide directing secretion; it reads MRKHLSWWWLATVCMLLFSHLSAVQ. The tract at residues 27 to 50 is flexible tail; it reads RGIKHRIKWNRKALPSTAQITEAQ. O-linked (GalNAc...) threonine glycosylation occurs at T43. A globular region spans residues 51-152; the sequence is VAENRPGAFI…KHCEFWLERG (102 aa). Disulfide bonds link C94–C145 and C108–C140. N98 and N110 each carry an N-linked (GlcNAc...) asparagine glycan. Positions 122-139 are cu(2+) binding; sequence KPDNKLHQQVLWRLVQEL. G152 is lipidated: GPI-anchor amidated glycine. Residues 153–176 constitute a propeptide, removed in mature form; that stretch reads AGLRVTMHQPVLLCLLALIWLTVK.

It belongs to the prion family. Post-translationally, N-glycosylated. N-glycosylated at two distinct sites. O-glycosylated. In terms of tissue distribution, expressed in testis, in Sertoli cells, ejaculated spermatozoa and in seminal fluid (at protein level).

The protein resides in the cell membrane. Its function is as follows. Required for normal acrosome reaction and for normal male fertility. Can bind Cu(2+). The sequence is that of Prion-like protein doppel (PRND) from Homo sapiens (Human).